The sequence spans 333 residues: Dehydrodolichyl diphosphate synthase complex subunit Dhdds (333 aa).

5 residues coordinate (2E,6E)-farnesyl diphosphate: Asp-34, Gly-35, Arg-37, Arg-38, and Arg-85. Asp-34 provides a ligand contact to Mg(2+). Residues Arg-38, Arg-85, Arg-205, Arg-211, and Ser-213 each contribute to the isopentenyl diphosphate site.

The protein belongs to the UPP synthase family. In terms of assembly, the active dehydrodolichyl diphosphate synthase complex is a heterotetramer composed of a dimer of heterodimer of DHDDS and NUS1. Interacts with NPC2. The cofactor is Mg(2+).

The protein resides in the endoplasmic reticulum membrane. The enzyme catalyses n isopentenyl diphosphate + (2E,6E)-farnesyl diphosphate = a di-trans,poly-cis-polyprenyl diphosphate + n diphosphate. Its pathway is protein modification; protein glycosylation. It participates in lipid metabolism. With NUS1, forms the dehydrodolichyl diphosphate synthase (DDS) complex, an essential component of the dolichol monophosphate (Dol-P) biosynthetic machinery. Both subunits contribute to enzymatic activity, i.e. condensation of multiple copies of isopentenyl pyrophosphate (IPP) to farnesyl pyrophosphate (FPP) to produce dehydrodolichyl diphosphate (Dedol-PP), a precursor of dolichol phosphate which is utilized as a sugar carrier in protein glycosylation in the endoplasmic reticulum (ER). Synthesizes long-chain polyprenols, mostly of C95 and C100 chain length. Regulates the glycosylation and stability of nascent NPC2, thereby promoting trafficking of LDL-derived cholesterol. The chain is Dehydrodolichyl diphosphate synthase complex subunit Dhdds from Mus musculus (Mouse).